A 141-amino-acid chain; its full sequence is Organic hydroperoxide resistance protein OhrA (141 aa).

This sequence belongs to the OsmC/Ohr family.

Its function is as follows. Involved in organic hydroperoxide resistance. The sequence is that of Organic hydroperoxide resistance protein OhrA (ohrA) from Bacillus subtilis (strain 168).